The sequence spans 938 residues: Catenin delta-1 (938 aa).

Met-1 is modified (N-acetylmethionine). Residues 1–357 (MDDSEVESTA…ASLDSLRKGM (357 aa)) form a necessary and sufficient for interaction with CCDC85B region. Ser-4 carries the phosphoserine modification. A coiled-coil region spans residues 10–46 (ASILASVKEQEAQFEKLTRALEEERRHVSAQLERVRV). Ser-47 is modified (phosphoserine). Thr-59 is subject to Phosphothreonine. Tyr-112 bears the Phosphotyrosine; by FYN mark. Ser-125 bears the Phosphoserine mark. Phosphotyrosine is present on residues Tyr-217 and Tyr-221. Phosphoserine is present on Ser-225. At Tyr-228 the chain carries Phosphotyrosine. Ser-230 and Ser-252 each carry phosphoserine. Position 257 is a phosphotyrosine (Tyr-257). 2 positions are modified to phosphoserine: Ser-268 and Ser-269. Tyr-280 is modified (phosphotyrosine). Residue Ser-288 is modified to Phosphoserine. A Phosphotyrosine modification is found at Tyr-291. Position 300 is a phosphoserine (Ser-300). Residue Thr-304 is modified to Phosphothreonine. Residues Ser-320, Ser-346, Ser-349, and Ser-352 each carry the phosphoserine modification. 4 ARM repeats span residues 358-395 (PPPS…HLCY), 398-437 (DKVK…NISF), 441-475 (QDNK…ITGT), and 476-516 (LWNL…NEDC). Residue Lys-421 forms a Glycyl lysine isopeptide (Lys-Gly) (interchain with G-Cter in SUMO2) linkage. Lys-517 participates in a covalent cross-link: Glycyl lysine isopeptide (Lys-Gly) (interchain with G-Cter in SUMO2). ARM repeat units follow at residues 534-573 (LRNV…DSDS), 583-624 (LRNL…AKKG), 653-693 (ARGY…NLCA), 700-739 (RYIR…NLAV), 740-780 (DARN…SILN), and 781-826 (TINE…ALVL). Ser-617 carries the phosphoserine modification. Residues 622–629 (KKGKDEWF) carry the Nuclear localization signal (NLS) motif. The residue at position 713 (Ser-713) is a Phosphoserine. Phosphoserine occurs at positions 811, 847, 857, 859, 861, and 864. The tract at residues 855-938 (NASRSQSSHS…LKGAPLMQKI (84 aa)) is disordered. Phosphotyrosine is present on Tyr-865. The residue at position 868 (Ser-868) is a Phosphoserine. Phosphothreonine is present on Thr-869. The span at 875-888 (RNQKSDKKPDREEI) shows a compositional bias: basic and acidic residues. Ser-879 bears the Phosphoserine mark. Residue Lys-882 forms a Glycyl lysine isopeptide (Lys-Gly) (interchain with G-Cter in SUMO2) linkage. A compositionally biased stretch (polar residues) spans 892-908 (NMGSNTKSLDNNYSTLN). Ser-899 is subject to Phosphoserine. Phosphotyrosine is present on Tyr-904. A phosphothreonine mark is found at Thr-906 and Thr-916. Residues 909 to 922 (ERGDHNRTLDRSGD) are compositionally biased toward basic and acidic residues. At Ser-920 the chain carries Phosphoserine.

It belongs to the beta-catenin family. Belongs to a multiprotein cell-cell adhesion complex that also contains E-cadherin/CDH1, alpha-catenin/CTNNA1, beta-catenin/CTNNB1, and gamma-catenin/JUP. Binds to the C-terminal fragment of PSEN1 and mutually competes for CDH1. Interacts with ZBTB33. Interacts with GLIS2. Interacts with FER. Interacts with NANOS1 (via N-terminal region). Interacts (via N-terminus) with GNA12; the interaction regulates CDH1-mediated cell-cell adhesion. Interacts with GNA13. Component of a cadherin:catenin adhesion complex composed of at least of CDH26, beta-catenin/CTNNB1, alpha-catenin/CTNNA1 and p120 catenin/CTNND1. Interacts with CCDC85B. Interacts with PLPP3; negatively regulates the PLPP3-mediated stabilization of CTNNB1. Interacts with DSG3; the interaction facilitates DSG3 localization and retention at cell-cell junctions. Interacts with CTNND1/p120-catenin; the interaction controls CADH5 endocytosis. In terms of processing, phosphorylated by FER and other protein-tyrosine kinases. Phosphorylated at Ser-288 by PAK5. Dephosphorylated by PTPRJ. As to expression, expressed in basal keratinocytes (at protein level).

Its subcellular location is the cell junction. It is found in the adherens junction. The protein localises to the cytoplasm. The protein resides in the nucleus. It localises to the cell membrane. Its function is as follows. Key regulator of cell-cell adhesion that associates with and regulates the cell adhesion properties of both C-, E- and N-cadherins, being critical for their surface stability. Promotes localization and retention of DSG3 at cell-cell junctions, via its interaction with DSG3. Beside cell-cell adhesion, regulates gene transcription through several transcription factors including ZBTB33/Kaiso2 and GLIS2, and the activity of Rho family GTPases and downstream cytoskeletal dynamics. Implicated both in cell transformation by SRC and in ligand-induced receptor signaling through the EGF, PDGF, CSF-1 and ERBB2 receptors. The chain is Catenin delta-1 (Ctnnd1) from Mus musculus (Mouse).